A 507-amino-acid chain; its full sequence is Blue light receptor lreB (507 aa).

One can recognise a PAS domain in the interval arginine 170 to threonine 234. The GATA-type zinc-finger motif lies at cysteine 463–cysteine 488.

Its function is as follows. Probable transcription factor involved in light regulation. Plays crucial roles in fungal growth and asexual development. Involved in conidiophore formation, sclerotium production, and conidial stress tolerance. Positively regulates the fungal pathogenicity towards maize and aflatoxin B1 production. The sequence is that of Blue light receptor lreB from Aspergillus flavus.